Consider the following 262-residue polypeptide: Acyl-[acyl-carrier-protein]--UDP-N-acetylglucosamine O-acyltransferase (262 aa).

Belongs to the transferase hexapeptide repeat family. LpxA subfamily. In terms of assembly, homotrimer.

The protein resides in the cytoplasm. The catalysed reaction is a (3R)-hydroxyacyl-[ACP] + UDP-N-acetyl-alpha-D-glucosamine = a UDP-3-O-[(3R)-3-hydroxyacyl]-N-acetyl-alpha-D-glucosamine + holo-[ACP]. It functions in the pathway glycolipid biosynthesis; lipid IV(A) biosynthesis; lipid IV(A) from (3R)-3-hydroxytetradecanoyl-[acyl-carrier-protein] and UDP-N-acetyl-alpha-D-glucosamine: step 1/6. In terms of biological role, involved in the biosynthesis of lipid A, a phosphorylated glycolipid that anchors the lipopolysaccharide to the outer membrane of the cell. This is Acyl-[acyl-carrier-protein]--UDP-N-acetylglucosamine O-acyltransferase from Erwinia tasmaniensis (strain DSM 17950 / CFBP 7177 / CIP 109463 / NCPPB 4357 / Et1/99).